Reading from the N-terminus, the 242-residue chain is 3-dehydroquinate dehydratase (242 aa).

Residues 39–41 (EIR) and Arg73 each bind 3-dehydroquinate. The active-site Proton donor/acceptor is His135. The active-site Schiff-base intermediate with substrate is Lys162. Positions 203 and 228 each coordinate 3-dehydroquinate.

Belongs to the type-I 3-dehydroquinase family. As to quaternary structure, homodimer.

It catalyses the reaction 3-dehydroquinate = 3-dehydroshikimate + H2O. The protein operates within metabolic intermediate biosynthesis; chorismate biosynthesis; chorismate from D-erythrose 4-phosphate and phosphoenolpyruvate: step 3/7. Involved in the third step of the chorismate pathway, which leads to the biosynthesis of aromatic amino acids. Catalyzes the cis-dehydration of 3-dehydroquinate (DHQ) and introduces the first double bond of the aromatic ring to yield 3-dehydroshikimate. This is 3-dehydroquinate dehydratase from Methanosarcina mazei (strain ATCC BAA-159 / DSM 3647 / Goe1 / Go1 / JCM 11833 / OCM 88) (Methanosarcina frisia).